We begin with the raw amino-acid sequence, 247 residues long: TM2 domain-containing protein 3 (247 aa).

A signal peptide spans 1–30 (MDLMMALKRVCRVLLFVTQMYVFSGRGSLS). Topologically, residues 31–179 (FEYSQPVAQP…RTFPKMLYCN (149 aa)) are extracellular. N87, N99, N139, N155, N169, and N179 each carry an N-linked (GlcNAc...) asparagine glycan. A helical membrane pass occupies residues 180–200 (WTGGYKWSTALALSITLGGFG). One can recognise a TM2 domain in the interval 183 to 231 (GYKWSTALALSITLGGFGADRFYLGQWREGLGKLFSFGGLGIWTLIDVF). Topologically, residues 201-215 (ADRFYLGQWREGLGK) are cytoplasmic. A helical membrane pass occupies residues 216 to 236 (LFSFGGLGIWTLIDVFLISVG). The Extracellular segment spans residues 237–247 (YVGPADGSLYI).

This sequence belongs to the TM2 family.

The protein localises to the membrane. In Xenopus laevis (African clawed frog), this protein is TM2 domain-containing protein 3 (tm2d3).